A 355-amino-acid chain; its full sequence is CX3C chemokine receptor 1 (355 aa).

Over M1–T31 the chain is Extracellular. Residues V32 to S59 traverse the membrane as a helical segment. Residues K60–Y69 lie on the Cytoplasmic side of the membrane. Residues L70–Y90 form a helical membrane-spanning segment. Over L91–K103 the chain is Extracellular. C102 and C175 form a disulfide bridge. The helical transmembrane segment at F104 to I125 threads the bilayer. The Cytoplasmic segment spans residues D126–T142. Residues V143–F167 traverse the membrane as a helical segment. At T168–T195 the chain is on the extracellular side. Residues N196–I215 traverse the membrane as a helical segment. At Q216–K231 the chain is on the cytoplasmic side. A helical transmembrane segment spans residues L232–L256. Topologically, residues K257 to L273 are extracellular. Residues A274 to G297 form a helical membrane-spanning segment. Residues E298–L355 are Cytoplasmic-facing. T346 carries the phosphothreonine modification.

Belongs to the G-protein coupled receptor 1 family. Found in a ternary complex with CX3CL1 and ITGAV:ITGB3 or ITGA4:ITGB1. As to quaternary structure, (Microbial infection) Interacts with human respiratory syncytial virus (HRSV) protein G; this interaction modulates host immune response. In terms of assembly, (Microbial infection) Interacts with HIV-1 envelope polyprotein gp160. This protein is not N-glycosylated which is unusual for G-protein-coupled receptors. In terms of tissue distribution, expressed in lymphoid and neural tissues. Expressed in lymphocyte subsets, such as natural killer (NK) cells, gamma-delta T-cells and terminally differentiated CD8(+) T-cells. Expressed in smooth muscle cells in atherosclerotic plaques.

It localises to the cell membrane. Receptor for the C-X3-C chemokine fractalkine (CX3CL1) present on many early leukocyte cells; CX3CR1-CX3CL1 signaling exerts distinct functions in different tissue compartments, such as immune response, inflammation, cell adhesion and chemotaxis. CX3CR1-CX3CL1 signaling mediates cell migratory functions. Responsible for the recruitment of natural killer (NK) cells to inflamed tissues. Acts as a regulator of inflammation process leading to atherogenesis by mediating macrophage and monocyte recruitment to inflamed atherosclerotic plaques, promoting cell survival. Involved in airway inflammation by promoting interleukin 2-producing T helper (Th2) cell survival in inflamed lung. Involved in the migration of circulating monocytes to non-inflamed tissues, where they differentiate into macrophages and dendritic cells. Acts as a negative regulator of angiogenesis, probably by promoting macrophage chemotaxis. Plays a key role in brain microglia by regulating inflammatory response in the central nervous system (CNS) and regulating synapse maturation. Required to restrain the microglial inflammatory response in the CNS and the resulting parenchymal damage in response to pathological stimuli. Involved in brain development by participating in synaptic pruning, a natural process during which brain microglia eliminates extra synapses during postnatal development. Synaptic pruning by microglia is required to promote the maturation of circuit connectivity during brain development. Acts as an important regulator of the gut microbiota by controlling immunity to intestinal bacteria and fungi. Expressed in lamina propria dendritic cells in the small intestine, which form transepithelial dendrites capable of taking up bacteria in order to provide defense against pathogenic bacteria. Required to initiate innate and adaptive immune responses against dissemination of commensal fungi (mycobiota) component of the gut: expressed in mononuclear phagocytes (MNPs) and acts by promoting induction of antifungal IgG antibodies response to confer protection against disseminated C.albicans or C.auris infection. Also acts as a receptor for C-C motif chemokine CCL26, inducing cell chemotaxis. Functionally, (Microbial infection) Acts as a coreceptor with CD4 for HIV-1 virus envelope protein. In terms of biological role, (Microbial infection) Acts as a coreceptor with CD4 for HIV-1 virus envelope protein. May have more potent HIV-1 coreceptothr activity than isoform 1. Its function is as follows. (Microbial infection) Acts as a coreceptor with CD4 for HIV-1 virus envelope protein. May have more potent HIV-1 coreceptor activity than isoform 1. This Homo sapiens (Human) protein is CX3C chemokine receptor 1.